The following is a 253-amino-acid chain: Succinate dehydrogenase [ubiquinone] iron-sulfur subunit, mitochondrial (253 aa).

Residues 23–114 enclose the 2Fe-2S ferredoxin-type domain; sequence FKIYRWNPDK…TTKIYPLPHM (92 aa). [2Fe-2S] cluster is bound by residues Cys-74, Cys-79, Cys-82, and Cys-94. Positions 156–186 constitute a 4Fe-4S ferredoxin-type domain; it reads DRKKLDGLYECILCACCSTSCPSYWWNQEEY. Residues Cys-166, Cys-169, and Cys-172 each contribute to the [4Fe-4S] cluster site. Cys-176 contacts [3Fe-4S] cluster. Trp-181 serves as a coordination point for a ubiquinone. The [3Fe-4S] cluster site is built by Cys-223 and Cys-229. A [4Fe-4S] cluster-binding site is contributed by Cys-233.

This sequence belongs to the succinate dehydrogenase/fumarate reductase iron-sulfur protein family. As to quaternary structure, component of complex II composed of four subunits: a flavoprotein (FP), an iron-sulfur protein (IP), and a cytochrome b composed of a large and a small subunit. The cofactor is [2Fe-2S] cluster. It depends on [3Fe-4S] cluster as a cofactor. Requires [4Fe-4S] cluster as cofactor.

It localises to the mitochondrion inner membrane. It carries out the reaction a quinone + succinate = fumarate + a quinol. It participates in carbohydrate metabolism; tricarboxylic acid cycle; fumarate from succinate (eukaryal route): step 1/1. Its function is as follows. Iron-sulfur protein (IP) subunit of succinate dehydrogenase (SDH) that is involved in complex II of the mitochondrial electron transport chain and is responsible for transferring electrons from succinate to ubiquinone (coenzyme Q). This Candida glabrata (strain ATCC 2001 / BCRC 20586 / JCM 3761 / NBRC 0622 / NRRL Y-65 / CBS 138) (Yeast) protein is Succinate dehydrogenase [ubiquinone] iron-sulfur subunit, mitochondrial (SDH2).